Consider the following 500-residue polypeptide: Ferulic acid decarboxylase 1 (500 aa).

Positions 168, 191, and 233 each coordinate Mn(2+). Residues 168 to 173, 190 to 191, and glutamate 233 each bind prenylated FMN; these read NWSIAR and QH. Glutamate 282 (proton donor) is an active-site residue. Lysine 391 lines the prenylated FMN pocket.

This sequence belongs to the UbiD family. UbiD-like/FDC subfamily. Homodimer. May form higher order oligomers. Mn(2+) is required as a cofactor. The cofactor is prenylated FMN.

The protein localises to the cytoplasm. The catalysed reaction is (E)-4-coumarate + H(+) = 4-vinylphenol + CO2. The enzyme catalyses (E)-cinnamate + H(+) = styrene + CO2. It catalyses the reaction (E)-ferulate + H(+) = 2-methoxy-4-vinylphenol + CO2. Catalyzes the reversible decarboxylation of aromatic carboxylic acids like ferulic acid, p-coumaric acid or cinnamic acid, producing the corresponding vinyl derivatives 4-vinylphenol, 4-vinylguaiacol, and styrene, respectively, which play the role of aroma metabolites. In Aspergillus niger (strain ATCC MYA-4892 / CBS 513.88 / FGSC A1513), this protein is Ferulic acid decarboxylase 1.